Reading from the N-terminus, the 102-residue chain is NADH-quinone oxidoreductase subunit K 1 (102 aa).

3 consecutive transmembrane segments (helical) span residues 5 to 25 (LYEV…CVVA), 30 to 50 (VIMM…TFVG), and 62 to 82 (VFSL…LAMV).

It belongs to the complex I subunit 4L family. NDH-1 is composed of 14 different subunits. Subunits NuoA, H, J, K, L, M, N constitute the membrane sector of the complex.

It is found in the cell inner membrane. The catalysed reaction is a quinone + NADH + 5 H(+)(in) = a quinol + NAD(+) + 4 H(+)(out). Its function is as follows. NDH-1 shuttles electrons from NADH, via FMN and iron-sulfur (Fe-S) centers, to quinones in the respiratory chain. The immediate electron acceptor for the enzyme in this species is believed to be ubiquinone. Couples the redox reaction to proton translocation (for every two electrons transferred, four hydrogen ions are translocated across the cytoplasmic membrane), and thus conserves the redox energy in a proton gradient. In Citrifermentans bemidjiense (strain ATCC BAA-1014 / DSM 16622 / JCM 12645 / Bem) (Geobacter bemidjiensis), this protein is NADH-quinone oxidoreductase subunit K 1.